A 262-amino-acid chain; its full sequence is Aminoglycoside 3'-phosphotransferase (262 aa).

Asp-187 acts as the Proton acceptor in catalysis.

It belongs to the aminoglycoside phosphotransferase family. In terms of assembly, monomer.

Its subcellular location is the cytoplasm. The enzyme catalyses kanamycin A + ATP = kanamycin 3'-phosphate + ADP + H(+). Resistance to butirosin and structurally-related aminoglycosides, including kanamycin and amikacin. This is Aminoglycoside 3'-phosphotransferase from Niallia circulans (Bacillus circulans).